A 508-amino-acid chain; its full sequence is Arabinose import ATP-binding protein AraG (508 aa).

ABC transporter domains are found at residues 5 to 240 (LEFQ…MVGR) and 250 to 496 (ARTL…LPDA). An ATP-binding site is contributed by 37 to 44 (GENGAGKS).

The protein belongs to the ABC transporter superfamily. Arabinose importer (TC 3.A.1.2.2) family. In terms of assembly, the complex is composed of two ATP-binding proteins (AraG), two transmembrane proteins (AraH) and a solute-binding protein (AraF).

The protein resides in the cell inner membrane. It carries out the reaction L-arabinose(out) + ATP + H2O = L-arabinose(in) + ADP + phosphate + H(+). Part of the ABC transporter complex AraFGH involved in arabinose import. Responsible for energy coupling to the transport system. This Rhizobium meliloti (strain 1021) (Ensifer meliloti) protein is Arabinose import ATP-binding protein AraG.